The primary structure comprises 487 residues: Adenosylhomocysteinase (487 aa).

Residues Thr76, Asp151, and Glu212 each contribute to the substrate site. 213 to 215 (TTT) is an NAD(+) binding site. Substrate-binding residues include Lys242 and Asp246. NAD(+) contacts are provided by residues Asn247, 276–281 (GYGDVG), Glu299, Asn334, 355–357 (IGH), and Asn403.

Belongs to the adenosylhomocysteinase family. The cofactor is NAD(+).

It is found in the cytoplasm. It carries out the reaction S-adenosyl-L-homocysteine + H2O = L-homocysteine + adenosine. Its pathway is amino-acid biosynthesis; L-homocysteine biosynthesis; L-homocysteine from S-adenosyl-L-homocysteine: step 1/1. In terms of biological role, may play a key role in the regulation of the intracellular concentration of adenosylhomocysteine. This chain is Adenosylhomocysteinase, found in Bacteroides fragilis (strain YCH46).